We begin with the raw amino-acid sequence, 163 residues long: Nucleotide-binding protein Mvan_0997 (163 aa).

This sequence belongs to the YajQ family.

Nucleotide-binding protein. The protein is Nucleotide-binding protein Mvan_0997 of Mycolicibacterium vanbaalenii (strain DSM 7251 / JCM 13017 / BCRC 16820 / KCTC 9966 / NRRL B-24157 / PYR-1) (Mycobacterium vanbaalenii).